The primary structure comprises 125 residues: Small ribosomal subunit protein eS26 (125 aa).

This sequence belongs to the eukaryotic ribosomal protein eS26 family.

This is Small ribosomal subunit protein eS26 (RPS26) from Sterkiella nova (Ciliate).